Consider the following 495-residue polypeptide: Cysteine--tRNA ligase (495 aa).

C35 contacts Zn(2+). Positions 37 to 47 (PTVYSNVHLGN) match the 'HIGH' region motif. C230, H255, and E259 together coordinate Zn(2+). Positions 287 to 291 (KMSKS) match the 'KMSKS' region motif. Residue K290 participates in ATP binding.

The protein belongs to the class-I aminoacyl-tRNA synthetase family. Monomer. The cofactor is Zn(2+).

The protein resides in the cytoplasm. It carries out the reaction tRNA(Cys) + L-cysteine + ATP = L-cysteinyl-tRNA(Cys) + AMP + diphosphate. This chain is Cysteine--tRNA ligase, found in Flavobacterium psychrophilum (strain ATCC 49511 / DSM 21280 / CIP 103535 / JIP02/86).